Consider the following 291-residue polypeptide: Probable alpha-L-glutamate ligase (291 aa).

An ATP-grasp domain is found at 104-287; sequence HQLLASQGID…VAGTIIQHLE (184 aa). ATP contacts are provided by residues K141, 178–179, D187, and 211–213; these read EF and RSN. Mg(2+) is bound by residues D248, E260, and N262. Mn(2+) is bound by residues D248, E260, and N262.

It belongs to the RimK family. Mg(2+) is required as a cofactor. The cofactor is Mn(2+).

This chain is Probable alpha-L-glutamate ligase, found in Xanthomonas campestris pv. campestris (strain 8004).